The primary structure comprises 1250 residues: DNA excision repair protein ERCC-6-like (1250 aa).

Serine 14 is modified (phosphoserine). One copy of the TPR 1 repeat lies at 21-54 (YLRYVKEAKEATKNGDLEEAFKLFNLAKDIFPNE). The 169-residue stretch at 109 to 277 (SLYRDGRKGG…WSLFDFACQG (169 aa)) folds into the Helicase ATP-binding domain. Residue 122–129 (DDMGLGKT) participates in ATP binding. The short motif at 228–231 (DEAH) is the DEAH box element. Residues 464-620 (FLMDLLKRLR…EKKNPFRYFS (157 aa)) enclose the Helicase C-terminal domain. Positions 735–768 (VFPSSTKKKCPKLNKPQPQPSPLLSTHHTQEEDI) are disordered. A phosphoserine mark is found at serine 755, serine 774, serine 807, and serine 810. Threonine 813 is subject to Phosphothreonine. Phosphoserine is present on serine 820. The disordered stretch occupies residues 926–946 (SALQDAQASEAKLEEEPSASS). Residues serine 969, serine 971, serine 995, serine 1004, and serine 1028 each carry the phosphoserine modification. The segment at 1061–1092 (ASTPKNDISPPGRFFSSQIPSSVNKSMNSRRS) is disordered. Position 1063 is a phosphothreonine; by PLK1 (threonine 1063). Serine 1069 is modified (phosphoserine). The segment covering 1075-1087 (FSSQIPSSVNKSM) has biased composition (polar residues). A phosphoserine mark is found at serine 1098 and serine 1118. The disordered stretch occupies residues 1110–1199 (MEERLDDSSE…QDKAAEATND (90 aa)). Basic and acidic residues predominate over residues 1115-1124 (DDSSEAKGPE). The segment covering 1125-1135 (DYPEEGVEESS) has biased composition (acidic residues). Polar residues predominate over residues 1149–1173 (ETLSSENKSSWLMTSKPSALAQETS). Serine 1181 and serine 1188 each carry phosphoserine. The stretch at 1200-1233 (YETLVKRGKELKECGKIQEALNCLVKALDIKSAD) is one TPR 2 repeat.

The protein belongs to the SNF2/RAD54 helicase family. Interacts with PLK1, which phosphorylates it. Both proteins are mutually dependent on each other for correct subcellular localization. Interacts (via N-terminal TPR repeat) with BEND3 (via BEN domains 1 and 3); the interaction is direct. Phosphorylation by PLK1 prevents the association with chromosome arms and restricts its localization to the kinetochore-centromere region.

It is found in the chromosome. The protein resides in the centromere. It localises to the kinetochore. It catalyses the reaction ATP + H2O = ADP + phosphate + H(+). DNA helicase that acts as a tension sensor that associates with catenated DNA which is stretched under tension until it is resolved during anaphase. Functions as ATP-dependent DNA translocase. Can promote Holliday junction branch migration (in vitro). The chain is DNA excision repair protein ERCC-6-like (ERCC6L) from Homo sapiens (Human).